The following is a 167-amino-acid chain: Small ribosomal subunit protein uS5 (167 aa).

The S5 DRBM domain maps to 11–74 (LQEKLIAVNR…EKARRNMINV (64 aa)).

It belongs to the universal ribosomal protein uS5 family. Part of the 30S ribosomal subunit. Contacts proteins S4 and S8.

Its function is as follows. With S4 and S12 plays an important role in translational accuracy. In terms of biological role, located at the back of the 30S subunit body where it stabilizes the conformation of the head with respect to the body. The sequence is that of Small ribosomal subunit protein uS5 from Klebsiella pneumoniae subsp. pneumoniae (strain ATCC 700721 / MGH 78578).